An 85-amino-acid chain; its full sequence is N.vectensis toxin 1 4 (85 aa).

A signal peptide spans 1-20 (MASFKIVIVCLALLVAVASA). Positions 21–36 (RRRDMMSDDELDYHYS) are excised as a propeptide. Cystine bridges form between Cys42–Cys82, Cys44–Cys72, and Cys65–Cys83.

Belongs to the sea anemone sodium channel inhibitory toxin family. Type II subfamily. As to expression, expressed in ectodermal glands and in clumps outside of the extodermal layer. Is not expressed in nematocytes. In adult female tissues, shows similar expression levels in mesenteries (gametes-producing tissue), tentacles, pharynx and physa.

The protein resides in the secreted. Binds to site 3 of voltage-gated sodium channels and inhibits the inactivation process. Is highly active on DmNav1/TipE (drosophila) and is only extremely weakly active on rat Nav1.4-beta-1/SCN4A-SCN1B, and on human Nav1.5-beta-1/SCN5A-beta-1. This reveals high specificity for arthropod over mammalian channels. In vivo, when released into the medium, this recombinant toxin induces impaired swimming, paralysis and death of the crustacean A.nauplii within several hours. Also causes paralysis of cherry shrimps immediately after injection at very low doses. Its effect on zebrafish (D.rerio) larvae is also rapid, since it induces tail twitching accompanied by impaired swimming after 20 minutes and complete paralysis within 45 minutes. It has also been observed to cause death of zebrafish larvae within 1 hour. This chain is N.vectensis toxin 1 4, found in Nematostella vectensis (Starlet sea anemone).